The following is an 897-amino-acid chain: Molybdenum import ATP-binding protein ModC 2 (897 aa).

Residues 6–236 enclose the ABC transporter domain; sequence RGRIDAAFRG…PALPLAYSRD (231 aa). An ATP-binding site is contributed by 38 to 45; the sequence is GPSGCGKT. One can recognise a Mop domain in the interval 295–365; sequence ESSILNILPA…VKGVSLVRAS (71 aa). A disordered region spans residues 823-848; the sequence is LGDRSVLGPREPDAGAKGRKRQNDPE. The span at 832 to 848 shows a compositional bias: basic and acidic residues; the sequence is REPDAGAKGRKRQNDPE.

The protein belongs to the ABC transporter superfamily. Molybdate importer (TC 3.A.1.8) family. The complex is composed of two ATP-binding proteins (ModC), two transmembrane proteins (ModB) and a solute-binding protein (ModA).

It localises to the cell inner membrane. The catalysed reaction is molybdate(out) + ATP + H2O = molybdate(in) + ADP + phosphate + H(+). Functionally, part of the ABC transporter complex ModABC involved in molybdenum import. Responsible for energy coupling to the transport system. In Bradyrhizobium diazoefficiens (strain JCM 10833 / BCRC 13528 / IAM 13628 / NBRC 14792 / USDA 110), this protein is Molybdenum import ATP-binding protein ModC 2.